Consider the following 240-residue polypeptide: Ribonuclease PH (240 aa).

Phosphate contacts are provided by residues arginine 87 and glycine 125–arginine 127.

It belongs to the RNase PH family. In terms of assembly, homohexameric ring arranged as a trimer of dimers.

It carries out the reaction tRNA(n+1) + phosphate = tRNA(n) + a ribonucleoside 5'-diphosphate. In terms of biological role, phosphorolytic 3'-5' exoribonuclease that plays an important role in tRNA 3'-end maturation. Removes nucleotide residues following the 3'-CCA terminus of tRNAs; can also add nucleotides to the ends of RNA molecules by using nucleoside diphosphates as substrates, but this may not be physiologically important. Probably plays a role in initiation of 16S rRNA degradation (leading to ribosome degradation) during starvation. In Pseudomonas syringae pv. syringae (strain B728a), this protein is Ribonuclease PH.